We begin with the raw amino-acid sequence, 239 residues long: Protein NtpR (239 aa).

One can recognise a Glutamine amidotransferase type-1 domain in the interval 12–239 (LIRATDTFQG…GLFDFFVQEF (228 aa)). The active-site Nucleophile is the Cys113. Residues His217 and Glu219 contribute to the active site.

The polypeptide is Protein NtpR (ntpR) (Enterococcus hirae (strain ATCC 9790 / DSM 20160 / JCM 8729 / LMG 6399 / NBRC 3181 / NCIMB 6459 / NCDO 1258 / NCTC 12367 / WDCM 00089 / R)).